We begin with the raw amino-acid sequence, 436 residues long: Histidine--tRNA ligase (436 aa).

This sequence belongs to the class-II aminoacyl-tRNA synthetase family. Homodimer.

It is found in the cytoplasm. The enzyme catalyses tRNA(His) + L-histidine + ATP = L-histidyl-tRNA(His) + AMP + diphosphate + H(+). In Prochlorococcus marinus (strain MIT 9313), this protein is Histidine--tRNA ligase.